The sequence spans 120 residues: Ribosome-binding factor A (120 aa).

It belongs to the RbfA family. As to quaternary structure, monomer. Binds 30S ribosomal subunits, but not 50S ribosomal subunits or 70S ribosomes.

The protein localises to the cytoplasm. One of several proteins that assist in the late maturation steps of the functional core of the 30S ribosomal subunit. Associates with free 30S ribosomal subunits (but not with 30S subunits that are part of 70S ribosomes or polysomes). Required for efficient processing of 16S rRNA. May interact with the 5'-terminal helix region of 16S rRNA. The protein is Ribosome-binding factor A of Rickettsia felis (strain ATCC VR-1525 / URRWXCal2) (Rickettsia azadi).